The primary structure comprises 92 residues: Protein OP-ORF (92 aa).

The stretch at 53–82 (KMLAATISILEEEVTELVTELNNTTNLTAK) forms a coiled coil.

The sequence is that of Protein OP-ORF from Rice dwarf virus (isolate Fujian) (RDV).